The sequence spans 510 residues: Glycerol kinase (510 aa).

An ADP-binding site is contributed by Thr13. ATP-binding residues include Thr13 and Thr14. A sn-glycerol 3-phosphate-binding site is contributed by Thr13. Arg17 contributes to the ADP binding site. Residues Arg83, Glu84, Tyr135, and Asp255 each coordinate sn-glycerol 3-phosphate. Glycerol-binding residues include Arg83, Glu84, Tyr135, Asp255, and Gln256. 4 residues coordinate ADP: Thr277, Gly321, Gly421, and Asn425. ATP contacts are provided by Thr277, Gly321, and Gly421.

The protein belongs to the FGGY kinase family.

It catalyses the reaction glycerol + ATP = sn-glycerol 3-phosphate + ADP + H(+). It functions in the pathway polyol metabolism; glycerol degradation via glycerol kinase pathway; sn-glycerol 3-phosphate from glycerol: step 1/1. In terms of biological role, key enzyme in the regulation of glycerol uptake and metabolism. Catalyzes the phosphorylation of glycerol to yield sn-glycerol 3-phosphate. This is Glycerol kinase from Halobacterium salinarum (strain ATCC 29341 / DSM 671 / R1).